The primary structure comprises 160 residues: SsrA-binding protein (160 aa).

Belongs to the SmpB family.

The protein localises to the cytoplasm. In terms of biological role, required for rescue of stalled ribosomes mediated by trans-translation. Binds to transfer-messenger RNA (tmRNA), required for stable association of tmRNA with ribosomes. tmRNA and SmpB together mimic tRNA shape, replacing the anticodon stem-loop with SmpB. tmRNA is encoded by the ssrA gene; the 2 termini fold to resemble tRNA(Ala) and it encodes a 'tag peptide', a short internal open reading frame. During trans-translation Ala-aminoacylated tmRNA acts like a tRNA, entering the A-site of stalled ribosomes, displacing the stalled mRNA. The ribosome then switches to translate the ORF on the tmRNA; the nascent peptide is terminated with the 'tag peptide' encoded by the tmRNA and targeted for degradation. The ribosome is freed to recommence translation, which seems to be the essential function of trans-translation. In Histophilus somni (strain 129Pt) (Haemophilus somnus), this protein is SsrA-binding protein.